Here is a 267-residue protein sequence, read N- to C-terminus: Tryptophan synthase alpha chain (267 aa).

Active-site proton acceptor residues include E49 and D60.

The protein belongs to the TrpA family. As to quaternary structure, tetramer of two alpha and two beta chains.

It catalyses the reaction (1S,2R)-1-C-(indol-3-yl)glycerol 3-phosphate + L-serine = D-glyceraldehyde 3-phosphate + L-tryptophan + H2O. Its pathway is amino-acid biosynthesis; L-tryptophan biosynthesis; L-tryptophan from chorismate: step 5/5. Functionally, the alpha subunit is responsible for the aldol cleavage of indoleglycerol phosphate to indole and glyceraldehyde 3-phosphate. The protein is Tryptophan synthase alpha chain of Salinispora arenicola (strain CNS-205).